Consider the following 270-residue polypeptide: Phosphatidylglycerol--prolipoprotein diacylglyceryl transferase (270 aa).

A run of 4 helical transmembrane segments spans residues 19–39 (FPVY…LWLA), 56–76 (LVLI…VIFE), 92–112 (QGGL…VLFA), and 116–136 (GLSF…GQAI). Residue arginine 138 participates in a 1,2-diacyl-sn-glycero-3-phospho-(1'-sn-glycerol) binding. Transmembrane regions (helical) follow at residues 178–198 (HPTF…LLAL), 206–226 (GELF…VEGL), and 236–256 (LRIA…FIIV).

Belongs to the Lgt family.

Its subcellular location is the cell membrane. The enzyme catalyses L-cysteinyl-[prolipoprotein] + a 1,2-diacyl-sn-glycero-3-phospho-(1'-sn-glycerol) = an S-1,2-diacyl-sn-glyceryl-L-cysteinyl-[prolipoprotein] + sn-glycerol 1-phosphate + H(+). It functions in the pathway protein modification; lipoprotein biosynthesis (diacylglyceryl transfer). Its function is as follows. Catalyzes the transfer of the diacylglyceryl group from phosphatidylglycerol to the sulfhydryl group of the N-terminal cysteine of a prolipoprotein, the first step in the formation of mature lipoproteins. This chain is Phosphatidylglycerol--prolipoprotein diacylglyceryl transferase, found in Bacillus cereus (strain ATCC 14579 / DSM 31 / CCUG 7414 / JCM 2152 / NBRC 15305 / NCIMB 9373 / NCTC 2599 / NRRL B-3711).